Consider the following 51-residue polypeptide: Sperm protamine P1 (51 aa).

This sequence belongs to the protamine P1 family. Testis.

The protein localises to the nucleus. It is found in the chromosome. Protamines substitute for histones in the chromatin of sperm during the haploid phase of spermatogenesis. They compact sperm DNA into a highly condensed, stable and inactive complex. The chain is Sperm protamine P1 (PRM1) from Nasalis larvatus (Proboscis monkey).